Consider the following 270-residue polypeptide: tRNA pseudouridine synthase A (270 aa).

Residue D60 is the Nucleophile of the active site. The tract at residues 107-111 is RNA binding; the sequence is FHARF. Residue Y118 coordinates substrate. The interaction with tRNA stretch occupies residues 168 to 172; sequence QCQSR.

The protein belongs to the tRNA pseudouridine synthase TruA family. As to quaternary structure, homodimer.

The catalysed reaction is uridine(38/39/40) in tRNA = pseudouridine(38/39/40) in tRNA. Formation of pseudouridine at positions 38, 39 and 40 in the anticodon stem and loop of transfer RNAs. This is tRNA pseudouridine synthase A from Escherichia coli (strain 55989 / EAEC).